A 419-amino-acid polypeptide reads, in one-letter code: UDP-N-acetylglucosamine 1-carboxyvinyltransferase (419 aa).

22–23 (KN) provides a ligand contact to phosphoenolpyruvate. R92 contributes to the UDP-N-acetyl-alpha-D-glucosamine binding site. The active-site Proton donor is the C116. At C116 the chain carries 2-(S-cysteinyl)pyruvic acid O-phosphothioketal. Residues D306 and I328 each coordinate UDP-N-acetyl-alpha-D-glucosamine.

This sequence belongs to the EPSP synthase family. MurA subfamily.

The protein localises to the cytoplasm. It catalyses the reaction phosphoenolpyruvate + UDP-N-acetyl-alpha-D-glucosamine = UDP-N-acetyl-3-O-(1-carboxyvinyl)-alpha-D-glucosamine + phosphate. It participates in cell wall biogenesis; peptidoglycan biosynthesis. Cell wall formation. Adds enolpyruvyl to UDP-N-acetylglucosamine. The chain is UDP-N-acetylglucosamine 1-carboxyvinyltransferase from Pseudoalteromonas translucida (strain TAC 125).